Here is a 176-residue protein sequence, read N- to C-terminus: Co-chaperone protein HscB (176 aa).

In terms of domain architecture, J spans 2–74 (DYFTLFGLPA…LMRAEYLLSL (73 aa)).

It belongs to the HscB family. In terms of assembly, interacts with HscA and stimulates its ATPase activity. Interacts with IscU.

Co-chaperone involved in the maturation of iron-sulfur cluster-containing proteins. Seems to help targeting proteins to be folded toward HscA. This is Co-chaperone protein HscB from Escherichia coli O7:K1 (strain IAI39 / ExPEC).